The following is a 357-amino-acid chain: Phosphoribosylformylglycinamidine cyclo-ligase (357 aa).

Belongs to the AIR synthase family.

The protein resides in the cytoplasm. It carries out the reaction 2-formamido-N(1)-(5-O-phospho-beta-D-ribosyl)acetamidine + ATP = 5-amino-1-(5-phospho-beta-D-ribosyl)imidazole + ADP + phosphate + H(+). It participates in purine metabolism; IMP biosynthesis via de novo pathway; 5-amino-1-(5-phospho-D-ribosyl)imidazole from N(2)-formyl-N(1)-(5-phospho-D-ribosyl)glycinamide: step 2/2. The chain is Phosphoribosylformylglycinamidine cyclo-ligase from Allorhizobium ampelinum (strain ATCC BAA-846 / DSM 112012 / S4) (Agrobacterium vitis (strain S4)).